We begin with the raw amino-acid sequence, 98 residues long: MSIVYMNVMLAFMIALIGTLLYRHHLMSSLMCLEGMMLAMYIFISLISLNMHFTTMYMVPLIILVFAACEAALGLALLVKMFNYYGNDYVQNLNLLKC.

Helical transmembrane passes span 1–21 (MSIV…GTLL), 29–49 (SLMC…LISL), and 59–79 (VPLI…ALLV).

Belongs to the complex I subunit 4L family. As to quaternary structure, core subunit of respiratory chain NADH dehydrogenase (Complex I) which is composed of 45 different subunits.

Its subcellular location is the mitochondrion inner membrane. The catalysed reaction is a ubiquinone + NADH + 5 H(+)(in) = a ubiquinol + NAD(+) + 4 H(+)(out). In terms of biological role, core subunit of the mitochondrial membrane respiratory chain NADH dehydrogenase (Complex I) which catalyzes electron transfer from NADH through the respiratory chain, using ubiquinone as an electron acceptor. Part of the enzyme membrane arm which is embedded in the lipid bilayer and involved in proton translocation. This chain is NADH-ubiquinone oxidoreductase chain 4L (MT-ND4L), found in Hemiechinus auritus (Long-eared hedgehog).